The following is a 606-amino-acid chain: Maternal effect protein oskar (606 aa).

The HTH OST-type domain maps to 152-221 (EYPDIDSEVR…SGKRIFNLKA (70 aa)). Phosphoserine occurs at positions 270 and 275. Residues 425–439 (LMGDDFMLYLARMEL) are leucine-zipper.

As to quaternary structure, interacts with smaug (smg). In terms of assembly, interacts with yl/yolkless. Begins to accumulate at the posterior pole of the oocyte from stage 8 onwards.

The protein resides in the endosome. In terms of biological role, organizes the germ plasm and directs localization of the posterior determinant nanos. Oskar protein is required to keep nanos (nos) RNA and staufen protein at the posterior pole. This chain is Maternal effect protein oskar (osk), found in Drosophila melanogaster (Fruit fly).